Consider the following 298-residue polypeptide: Small ribosomal subunit biogenesis GTPase RsgA (298 aa).

The CP-type G domain occupies threonine 67 to leucine 228. Threonine 116–aspartate 119 contacts GTP. Phosphothreonine is present on threonine 166. Glycine 171–serine 179 is a GTP binding site. The Zn(2+) site is built by cysteine 252, cysteine 257, histidine 259, and cysteine 265.

Belongs to the TRAFAC class YlqF/YawG GTPase family. RsgA subfamily. Monomer, but able to form dimers. Associates with 30S ribosomal subunit; a phospho-mimetic mutation increases association. Probably binds 16S rRNA. Zn(2+) is required as a cofactor. In terms of processing, in vitro phosphorylated mostly on Thr (with lower signal on Ser) by PrkC in the presence of poly-L-Lys or myelin basic protein, dephosphorylated by PrpC. Most in vitro phosphorylation occurs on Thr-166, in vivo phosphorylation has not been detected, but it might vary during the cell cycle.

It localises to the cytoplasm. In terms of biological role, one of several proteins that assist in the late maturation steps of the functional core of the 30S ribosomal subunit. Helps release RbfA from mature subunits. May play a role in the assembly of ribosomal proteins into the subunit. Circularly permuted GTPase with a low level of activity and slow catalytic turnover, does not act on ATP. GTPase activity is stimulated by the presence of 30S or 70S ribosomes, phosphorylation increases stimulation. Depletion results in increased sensitivity to protein synthesis inhibitors that block the peptide channel or peptidyl transferase center on the ribosome, suggesting this protein functions in conjunction with the ribosome in vivo. Decreasing levels of protein lead to an increase in free 30S and 50S ribosomal subunits and a decrease in assembled 70S ribosomes. Suggested to serve as a specific transcription factor for proteins involved in late stages of peptidoglycan synthesis. In Bacillus subtilis (strain 168), this protein is Small ribosomal subunit biogenesis GTPase RsgA.